Consider the following 100-residue polypeptide: Small ribosomal subunit protein uS14c (100 aa).

The protein belongs to the universal ribosomal protein uS14 family. Part of the 30S ribosomal subunit.

It localises to the plastid. Binds 16S rRNA, required for the assembly of 30S particles. The polypeptide is Small ribosomal subunit protein uS14c (rps14) (Cuscuta reflexa (Southern Asian dodder)).